The chain runs to 195 residues: Recombination protein RecR (195 aa).

The C4-type zinc finger occupies 54–69 (CTICGSYTEDEICSIC). One can recognise a Toprim domain in the interval 77 to 172 (ATICVVGFPQ…NITRLASGLP (96 aa)).

Belongs to the RecR family.

Its function is as follows. May play a role in DNA repair. It seems to be involved in an RecBC-independent recombinational process of DNA repair. It may act with RecF and RecO. This is Recombination protein RecR from Treponema denticola (strain ATCC 35405 / DSM 14222 / CIP 103919 / JCM 8153 / KCTC 15104).